The primary structure comprises 396 residues: Elongation factor Tu (396 aa).

The 197-residue stretch at Lys10–Gln206 folds into the tr-type G domain. Residues Gly19–Thr26 are G1. Gly19–Thr26 contributes to the GTP binding site. Residue Thr26 participates in Mg(2+) binding. The interval Gly60–Ala64 is G2. The tract at residues Asp81–Gly84 is G3. GTP is bound by residues Asp81–His85 and Asn136–Asp139. Positions Asn136–Asp139 are G4. The tract at residues Ser174–Leu176 is G5.

It belongs to the TRAFAC class translation factor GTPase superfamily. Classic translation factor GTPase family. EF-Tu/EF-1A subfamily. In terms of assembly, monomer.

It localises to the cytoplasm. It catalyses the reaction GTP + H2O = GDP + phosphate + H(+). GTP hydrolase that promotes the GTP-dependent binding of aminoacyl-tRNA to the A-site of ribosomes during protein biosynthesis. This chain is Elongation factor Tu, found in Nitrosococcus oceani (strain ATCC 19707 / BCRC 17464 / JCM 30415 / NCIMB 11848 / C-107).